A 422-amino-acid chain; its full sequence is 5'-deoxyadenosine deaminase (422 aa).

Positions 57 and 59 each coordinate Zn(2+). Substrate-binding residues include E86 and H178. H205 serves as a coordination point for Zn(2+). Residues E208 and D294 each contribute to the substrate site. Residue D294 coordinates Zn(2+).

Belongs to the metallo-dependent hydrolases superfamily. MTA/SAH deaminase family. As to quaternary structure, homotetramer. It depends on Zn(2+) as a cofactor.

It carries out the reaction 5'-deoxyadenosine + H2O + H(+) = 5'-deoxyinosine + NH4(+). The enzyme catalyses S-adenosyl-L-homocysteine + H2O + H(+) = S-inosyl-L-homocysteine + NH4(+). It catalyses the reaction S-methyl-5'-thioadenosine + H2O + H(+) = S-methyl-5'-thioinosine + NH4(+). The catalysed reaction is adenosine + H2O + H(+) = inosine + NH4(+). It functions in the pathway amino-acid biosynthesis; S-adenosyl-L-methionine biosynthesis. Functionally, catalyzes the deamination of three SAM-derived enzymatic products, namely 5'-deoxyadenosine, S-adenosyl-L-homocysteine, and 5'-methylthioadenosine, to produce the inosine analogs. Can also deaminate adenosine. The preferred substrate for this enzyme is 5'-deoxyadenosine, but all these substrates are efficiently deaminated. Likely functions in a S-adenosyl-L-methionine (SAM) recycling pathway from S-adenosyl-L-homocysteine (SAH) produced from SAM-dependent methylation reactions. May also be involved in the recycling of 5'-deoxyadenosine, whereupon the 5'-deoxyribose moiety of 5'-deoxyinosine is further metabolized to deoxyhexoses used for the biosynthesis of aromatic amino acids in methanogens. The protein is 5'-deoxyadenosine deaminase of Methanococcus maripaludis (strain C5 / ATCC BAA-1333).